The chain runs to 341 residues: Holliday junction branch migration complex subunit RuvB (341 aa).

A large ATPase domain (RuvB-L) region spans residues 1-180 (MAKSHTLNPE…FGIQLRLDYY (180 aa)). 9 residues coordinate ATP: Leu19, Arg20, Gly61, Lys64, Thr65, Thr66, Arg170, Tyr180, and Arg217. Thr65 provides a ligand contact to Mg(2+). The tract at residues 181–251 (NDEEMKEIVL…LCLKAFEKMG (71 aa)) is small ATPAse domain (RuvB-S). The interval 254–341 (DLGLDGMDRQ…ENHGQDPTLF (88 aa)) is head domain (RuvB-H). Arg309 and Arg314 together coordinate DNA.

The protein belongs to the RuvB family. In terms of assembly, homohexamer. Forms an RuvA(8)-RuvB(12)-Holliday junction (HJ) complex. HJ DNA is sandwiched between 2 RuvA tetramers; dsDNA enters through RuvA and exits via RuvB. An RuvB hexamer assembles on each DNA strand where it exits the tetramer. Each RuvB hexamer is contacted by two RuvA subunits (via domain III) on 2 adjacent RuvB subunits; this complex drives branch migration. In the full resolvosome a probable DNA-RuvA(4)-RuvB(12)-RuvC(2) complex forms which resolves the HJ.

It localises to the cytoplasm. It carries out the reaction ATP + H2O = ADP + phosphate + H(+). Functionally, the RuvA-RuvB-RuvC complex processes Holliday junction (HJ) DNA during genetic recombination and DNA repair, while the RuvA-RuvB complex plays an important role in the rescue of blocked DNA replication forks via replication fork reversal (RFR). RuvA specifically binds to HJ cruciform DNA, conferring on it an open structure. The RuvB hexamer acts as an ATP-dependent pump, pulling dsDNA into and through the RuvAB complex. RuvB forms 2 homohexamers on either side of HJ DNA bound by 1 or 2 RuvA tetramers; 4 subunits per hexamer contact DNA at a time. Coordinated motions by a converter formed by DNA-disengaged RuvB subunits stimulates ATP hydrolysis and nucleotide exchange. Immobilization of the converter enables RuvB to convert the ATP-contained energy into a lever motion, pulling 2 nucleotides of DNA out of the RuvA tetramer per ATP hydrolyzed, thus driving DNA branch migration. The RuvB motors rotate together with the DNA substrate, which together with the progressing nucleotide cycle form the mechanistic basis for DNA recombination by continuous HJ branch migration. Branch migration allows RuvC to scan DNA until it finds its consensus sequence, where it cleaves and resolves cruciform DNA. In Leptospira borgpetersenii serovar Hardjo-bovis (strain L550), this protein is Holliday junction branch migration complex subunit RuvB.